The primary structure comprises 367 residues: DNA replication and repair protein RecF (367 aa).

ATP is bound at residue 30–37; the sequence is GSNGSGKT.

It belongs to the RecF family.

It localises to the cytoplasm. Its function is as follows. The RecF protein is involved in DNA metabolism; it is required for DNA replication and normal SOS inducibility. RecF binds preferentially to single-stranded, linear DNA. It also seems to bind ATP. This is DNA replication and repair protein RecF from Pseudomonas putida (strain ATCC 700007 / DSM 6899 / JCM 31910 / BCRC 17059 / LMG 24140 / F1).